A 98-amino-acid polypeptide reads, in one-letter code: HssA/B-like protein 34 (98 aa).

2 disordered regions span residues 1–26 and 60–98; these read MTLFSSISSMSSSMTSSRSSIASFGS and AKSSGGSCGGKGGSHNHGHGHGHGPHGHGGKGSGGSCSC. Residues 60 to 72 are compositionally biased toward gly residues; it reads AKSSGGSCGGKGG. Residues 73-88 show a composition bias toward basic residues; that stretch reads SHNHGHGHGHGPHGHG. Gly residues predominate over residues 89 to 98; it reads GKGSGGSCSC.

The protein belongs to the hssA/B family.

This Dictyostelium discoideum (Social amoeba) protein is HssA/B-like protein 34 (hssl34).